The sequence spans 161 residues: Sec-independent protein translocase protein TatB (161 aa).

Residues 2-22 (FNDIGALELVTLVVLAVLVFG) form a helical membrane-spanning segment. The interval 102–161 (DAVHGRDAESSSSGSSSGSSSAASGNGRVDMSKKPEKPEKPGKTDKPAADDRPPFDMDAT) is disordered. Residues 111–126 (SSSSGSSSGSSSAASG) show a composition bias toward low complexity. Positions 131–161 (DMSKKPEKPEKPGKTDKPAADDRPPFDMDAT) are enriched in basic and acidic residues.

It belongs to the TatB family. As to quaternary structure, the Tat system comprises two distinct complexes: a TatABC complex, containing multiple copies of TatA, TatB and TatC subunits, and a separate TatA complex, containing only TatA subunits. Substrates initially bind to the TatABC complex, which probably triggers association of the separate TatA complex to form the active translocon.

It is found in the cell membrane. Its function is as follows. Part of the twin-arginine translocation (Tat) system that transports large folded proteins containing a characteristic twin-arginine motif in their signal peptide across membranes. Together with TatC, TatB is part of a receptor directly interacting with Tat signal peptides. TatB may form an oligomeric binding site that transiently accommodates folded Tat precursor proteins before their translocation. This chain is Sec-independent protein translocase protein TatB, found in Streptomyces coelicolor (strain ATCC BAA-471 / A3(2) / M145).